The following is a 91-amino-acid chain: Potassium channel toxin TstKMK (91 aa).

An N-terminal signal peptide occupies residues 1–25; that stretch reads MVATNRCCVFALLFALLLVHSLTEA. A propeptide spanning residues 26 to 42 is cleaved from the precursor; the sequence is GKGKEILGKIKEKIIEA. The BetaSPN-type CS-alpha/beta domain occupies 58-91; sequence EYACPAIDKFCEDHCAAKKAVGKCDDFKCKCIKL. 3 cysteine pairs are disulfide-bonded: cysteine 61/cysteine 81, cysteine 68/cysteine 86, and cysteine 72/cysteine 88.

Belongs to the long chain scorpion toxin family. Class 2 subfamily. Expressed by the venom gland.

The protein localises to the secreted. Functionally, the full peptide presents antibacterial and cytotoxic activities. The synthetic C-terminus (AA 33-76) inhibits voltage-gated potassium channels Kv1.1/KCNA1, Kv1.2/KCNA2, and Kv1.3/KCNA3. This is Potassium channel toxin TstKMK from Tityus stigmurus (Brazilian scorpion).